The chain runs to 201 residues: Probable quinol oxidase subunit 3 (201 aa).

5 helical membrane-spanning segments follow: residues 20-40 (LGFW…FATL), 62-82 (LVLI…ISIY), 91-111 (LMMF…GFEI), 133-153 (FFIL…WIIC), and 172-192 (FIVS…FTAV).

The protein belongs to the cytochrome c oxidase subunit 3 family.

Its subcellular location is the cell membrane. The catalysed reaction is 2 a quinol + O2 = 2 a quinone + 2 H2O. Functionally, catalyzes quinol oxidation with the concomitant reduction of oxygen to water. This chain is Probable quinol oxidase subunit 3 (qoxC), found in Staphylococcus haemolyticus (strain JCSC1435).